Here is a 92-residue protein sequence, read N- to C-terminus: Small ribosomal subunit protein uS19 (92 aa).

It belongs to the universal ribosomal protein uS19 family.

Its function is as follows. Protein S19 forms a complex with S13 that binds strongly to the 16S ribosomal RNA. The polypeptide is Small ribosomal subunit protein uS19 (Aliivibrio salmonicida (strain LFI1238) (Vibrio salmonicida (strain LFI1238))).